The chain runs to 558 residues: PE cleavage protein A (558 aa).

Residues 1 to 93 (MSFLVVVPEF…SGSYAAAEAT (93 aa)) enclose the PE domain. The active site involves D297.

This sequence belongs to the mycobacterial PE family. PGRS subfamily. Post-translationally, undergoes auto-proteolytic processing.

It is found in the secreted. Its subcellular location is the cell surface. In terms of biological role, aspartic protease that processes the lipase LipY and other PE_PGRS proteins. Can also cleave itself. This chain is PE cleavage protein A, found in Mycobacterium tuberculosis (strain CDC 1551 / Oshkosh).